We begin with the raw amino-acid sequence, 129 residues long: Phosphoribosyl-AMP cyclohydrolase (129 aa).

Asp76 contacts Mg(2+). Cys77 contacts Zn(2+). Residues Asp78 and Asp80 each coordinate Mg(2+). Residues Cys97 and Cys104 each contribute to the Zn(2+) site.

This sequence belongs to the PRA-CH family. In terms of assembly, homodimer. Mg(2+) is required as a cofactor. Zn(2+) serves as cofactor.

It localises to the cytoplasm. The catalysed reaction is 1-(5-phospho-beta-D-ribosyl)-5'-AMP + H2O = 1-(5-phospho-beta-D-ribosyl)-5-[(5-phospho-beta-D-ribosylamino)methylideneamino]imidazole-4-carboxamide. It participates in amino-acid biosynthesis; L-histidine biosynthesis; L-histidine from 5-phospho-alpha-D-ribose 1-diphosphate: step 3/9. Its function is as follows. Catalyzes the hydrolysis of the adenine ring of phosphoribosyl-AMP. The protein is Phosphoribosyl-AMP cyclohydrolase of Leptothrix cholodnii (strain ATCC 51168 / LMG 8142 / SP-6) (Leptothrix discophora (strain SP-6)).